The following is a 177-amino-acid chain: Large ribosomal subunit protein uL6 (177 aa).

The protein belongs to the universal ribosomal protein uL6 family. As to quaternary structure, part of the 50S ribosomal subunit.

In terms of biological role, this protein binds to the 23S rRNA, and is important in its secondary structure. It is located near the subunit interface in the base of the L7/L12 stalk, and near the tRNA binding site of the peptidyltransferase center. This is Large ribosomal subunit protein uL6 from Citrobacter koseri (strain ATCC BAA-895 / CDC 4225-83 / SGSC4696).